The following is a 319-amino-acid chain: MPDTATGHPTSHGNVSPFVEIARADWAALAPATHLPLRETELVQLRGIGDRLDMHEVEDVYLPLSRLLNLYVTGTKKLHRDTSAFLGERAKSTPFIIGVAGSVAVGKSTVARLLREMLARWDDTPRVELVTTDGFLHPNAELQRRGLMERKGFPESYDRRALLRFVTQVKSGVPEVRAPFYSHLAYDIVPGAEVVVRQPDVLIIEGLNVLQPAASGAKLAVSDLFDFSIYVDARTHDIAQWYEERFLSLQRGAFSNPRSYFHRYAELSPAEAVARARGIWSAINEPNLEQNIRPTRSRATLVLRKDADHSVANVLLRKL.

101-108 (GSVAVGKS) is a binding site for ATP.

Belongs to the prokaryotic pantothenate kinase family.

It localises to the cytoplasm. It catalyses the reaction (R)-pantothenate + ATP = (R)-4'-phosphopantothenate + ADP + H(+). The protein operates within cofactor biosynthesis; coenzyme A biosynthesis; CoA from (R)-pantothenate: step 1/5. This Clavibacter michiganensis subsp. michiganensis (strain NCPPB 382) protein is Pantothenate kinase.